The chain runs to 356 residues: Heat-inducible transcription repressor HrcA (356 aa).

The protein belongs to the HrcA family.

Its function is as follows. Negative regulator of class I heat shock genes (grpE-dnaK-dnaJ and groELS operons). Prevents heat-shock induction of these operons. The protein is Heat-inducible transcription repressor HrcA of Bartonella tribocorum (strain CIP 105476 / IBS 506).